Here is a 66-residue protein sequence, read N- to C-terminus: Neurotoxin-like protein STR1 (66 aa).

The 64-residue stretch at 2–65 (RDGYIVHDGT…VWGEDGFMCW (64 aa)) folds into the LCN-type CS-alpha/beta domain. 4 disulfides stabilise this stretch: Cys-13-Cys-64, Cys-17-Cys-40, Cys-26-Cys-45, and Cys-30-Cys-47.

Belongs to the long (4 C-C) scorpion toxin superfamily. Sodium channel inhibitor family. Beta subfamily. As to expression, expressed by the venom gland.

The protein resides in the secreted. This protein is not toxic. In Androctonus australis (Sahara scorpion), this protein is Neurotoxin-like protein STR1.